Here is a 409-residue protein sequence, read N- to C-terminus: MGEQDPSDRLRGDQLKEPNQNGKGSFSQFSSSVRAMVRIRMKYQAIKKRRMEIASATPQIFTSPRSTSPKVFTFDNLHEPVNSNPASPRKRKKKRKGRVLYPTSSLRAVPTKESSRAKNCLYLLCIIVFLQVYNAIENLDDHVLKYDLEGLEKTLKREVFGQQEVAEGLLGHLQDYLSTYVHNKPLVLSFHGPTGVGKSHVGRLLAQHFRSVVGEELVMQYFVLHHCPTDDDIPVCTKSLESHISEMVSQGEEEEKIPVFIFDEVEHMPRQLMDTLRELIQPQNSNKYLNAIYILISNLGHEDITKFVLHNSSIAISGRLSLTQELTPWLRNYLQEHHGLFLDAEYLPFMLLEKSHVMDCFIDEMSREGFYPDRSHVERLAEELSYYIVGEREFSHTGCRQVVAKVNLL.

The span at 1-16 (MGEQDPSDRLRGDQLK) shows a compositional bias: basic and acidic residues. Disordered regions lie at residues 1-28 (MGEQDPSDRLRGDQLKEPNQNGKGSFSQ) and 75-99 (DNLHEPVNSNPASPRKRKKKRKGRV). Over residues 17 to 28 (EPNQNGKGSFSQ) the composition is skewed to polar residues. The span at 88 to 98 (PRKRKKKRKGR) shows a compositional bias: basic residues. Residues 120–136 (CLYLLCIIVFLQVYNAI) traverse the membrane as a helical segment. Position 192 to 199 (192 to 199 (GPTGVGKS)) interacts with ATP.

It belongs to the ClpA/ClpB family. Torsin subfamily.

It is found in the membrane. The polypeptide is Torsin-4A (tor4a) (Danio rerio (Zebrafish)).